Reading from the N-terminus, the 366-residue chain is Cytochrome c mitochondrial import factor CYC2 (366 aa).

The transit peptide at 1 to 50 directs the protein to the mitochondrion; sequence MLWKNYVLSSSRITRRLHKSPRKSSFSKNFFITGCLLTVGAVSSYLTYRY. The FAD-binding FR-type domain maps to 63–184; that stretch reads SYFVKYKISH…RGPFIDYEFP (122 aa).

Requires FAD as cofactor.

It is found in the mitochondrion inner membrane. In terms of biological role, redox component that participates in c-type cytochrome biogenesis in the mitochondrial intermembrane space. May play a role in the reduction of heme prior to its ligation to apocytochrome c by cytochrome c heme lyase. Has oxidoreductase activity in vitro. In Saccharomyces cerevisiae (strain ATCC 204508 / S288c) (Baker's yeast), this protein is Cytochrome c mitochondrial import factor CYC2 (CYC2).